The chain runs to 401 residues: Inositol phosphorylceramide synthase catalytic subunit AUR1 (401 aa).

Residues 1-41 are Cytoplasmic-facing; sequence MANPFSRWFLSERPPNCHVADLETSLDPHQTLLKVQKYKPA. The chain crosses the membrane as a helical span at residues 42–62; it reads LSDWVHYIFLGSIMLFVFITN. The Lumenal segment spans residues 63-64; sequence PA. A helical membrane pass occupies residues 65 to 85; the sequence is PWIFKILFYCFLGTLFIIPAT. Residues 86–87 lie on the Cytoplasmic side of the membrane; the sequence is SQ. Residues 88-108 traverse the membrane as a helical segment; that stretch reads FFFNALPILTWVALYFTSSYF. At 109–155 the chain is on the lumenal side; it reads PDDRRPPITVKVLPAVETILYGDNLSDILATSTNSFLDILAWLPYGL. Asn132 carries an N-linked (GlcNAc...) asparagine glycan. A helical membrane pass occupies residues 156–176; the sequence is FHFGAPFVVAAILFVFGPPTV. Residues 177 to 178 are Cytoplasmic-facing; it reads LQ. The chain crosses the membrane as a helical span at residues 179–199; the sequence is GYAFAFGYMNLFGVIMQNVFP. Over 200–245 the chain is Lumenal; it reads AAPPWYKILYGLQSANYDMHGSPGGLARIDKLLGINMYTTAFSNSS. The chain crosses the membrane as a helical span at residues 246-266; it reads VIFGAFPSLHSGCATMEALFF. Residues 267-268 lie on the Cytoplasmic side of the membrane; that stretch reads CY. A helical membrane pass occupies residues 269-289; that stretch reads CFPKLKPLFIAYVCWLWWSTM. Residues 290 to 291 lie on the Lumenal side of the membrane; the sequence is YL. Residues 292 to 312 traverse the membrane as a helical segment; it reads THHYFVDLMAGSVLSYVIFQY. The Cytoplasmic portion of the chain corresponds to 313-401; that stretch reads TKYTHLPIVD…SITSLGVKRA (89 aa). The interval 374-401 is disordered; it reads VSPSLFDGSTSVSRSSATSITSLGVKRA. Positions 382–395 are enriched in low complexity; it reads STSVSRSSATSITS. 2 positions are modified to phosphoserine: Ser392 and Ser395.

This sequence belongs to the AUR1 family. Component of the inositol phosphorylceramide synthase complex composed of at least AUR1 and KEI1.

The protein localises to the golgi apparatus. It localises to the golgi stack membrane. It catalyses the reaction an N-(2R-hydroxy-very-long-chain fatty acyl)-(R)-4-hydroxysphingoid base + a 1,2-diacyl-sn-glycero-3-phospho-(1D-myo-inositol) = a 1D-myo-inositol-1-phospho-N-[(R)-2-hydroxy-very-long-chain fatty acyl]-(R)-4-hydroxysphingoid base + a 1,2-diacyl-sn-glycerol. Its activity is regulated as follows. Inhibited by aureobasidin A (AbA), khafrefungin and rustmicin. Catalytic component of the inositol phosphorylceramide synthase which catalyzes the addition of a phosphorylinositol group onto ceramide to form inositol phosphorylceramide, an essential step in sphingolipid biosynthesis. This is Inositol phosphorylceramide synthase catalytic subunit AUR1 from Saccharomyces cerevisiae (strain ATCC 204508 / S288c) (Baker's yeast).